A 652-amino-acid chain; its full sequence is Iron-regulated outer membrane virulence protein (652 aa).

Residues 1-25 (MSRFNPSPVSLSVTLGLMFSASAFA) form the signal peptide. Residues 33–40 (ETMVVTAA) carry the TonB box motif. The TBDR plug domain occupies 45-162 (VIQNAPASIS…IGGVINIITR (118 aa)). The TBDR beta-barrel domain occupies 167 to 652 (QWSGNVQLST…RYWLGLDIAF (486 aa)). Positions 635–652 (YGYVEDGRRYWLGLDIAF) match the TonB C-terminal box motif.

This sequence belongs to the TonB-dependent receptor family.

It localises to the cell outer membrane. In terms of biological role, involved in the initial step of iron uptake by binding ferric vibriobactin, an iron chelatin siderophore that allows V.cholerae to extract iron from the environment. This Vibrio cholerae serotype O1 (strain ATCC 39541 / Classical Ogawa 395 / O395) protein is Iron-regulated outer membrane virulence protein (irgA).